Reading from the N-terminus, the 364-residue chain is Fructose-bisphosphate aldolase B (364 aa).

At Ala-2 the chain carries N-acetylalanine. N6-succinyllysine is present on Lys-13. Residue Ser-36 is modified to Phosphoserine. At Thr-39 the chain carries Phosphothreonine. A beta-D-fructose 1,6-bisphosphate-binding site is contributed by Arg-43. Phosphoserine is present on Ser-89. Thr-119 carries the post-translational modification Phosphothreonine. N6-succinyllysine is present on Lys-121. A Phosphoserine modification is found at Ser-132. The active-site Proton acceptor is the Glu-188. Catalysis depends on Lys-230, which acts as the Schiff-base intermediate with dihydroxyacetone-P. Phosphoserine occurs at positions 272, 276, 299, and 301. Residue Ser-272 to Gly-274 participates in beta-D-fructose 1,6-bisphosphate binding. Beta-D-fructose 1,6-bisphosphate is bound at residue Arg-304. Ser-309 bears the Phosphoserine mark. An N6-succinyllysine modification is found at Lys-317.

This sequence belongs to the class I fructose-bisphosphate aldolase family. In terms of assembly, homotetramer. Interacts with BBS1, BBS2, BBS4 and BBS7. Forms a ternary complex with G6PD and TP53; this interaction is direct.

The protein localises to the cytoplasm. The protein resides in the cytosol. Its subcellular location is the cytoskeleton. It is found in the microtubule organizing center. It localises to the centrosome. The protein localises to the centriolar satellite. The catalysed reaction is beta-D-fructose 1,6-bisphosphate = D-glyceraldehyde 3-phosphate + dihydroxyacetone phosphate. It carries out the reaction beta-D-fructose 1-phosphate = D-glyceraldehyde + dihydroxyacetone phosphate. It functions in the pathway carbohydrate degradation; glycolysis; D-glyceraldehyde 3-phosphate and glycerone phosphate from D-glucose: step 4/4. Its pathway is carbohydrate biosynthesis; gluconeogenesis. The protein operates within carbohydrate metabolism; fructose metabolism. Its function is as follows. Catalyzes the aldol cleavage of fructose 1,6-biphosphate to form two triosephosphates dihydroxyacetone phosphate and D-glyceraldehyde 3-phosphate in glycolysis as well as the reverse stereospecific aldol addition reaction in gluconeogenesis. In fructolysis, metabolizes fructose 1-phosphate derived from the phosphorylation of dietary fructose by fructokinase into dihydroxyacetone phosphate and D-glyceraldehyde. Acts as an adapter independently of its enzymatic activity, exerts a tumor suppressor role by stabilizing the ternary complex with G6PD and TP53 to inhibit G6PD activity and keep oxidative pentose phosphate metabolism in check. The sequence is that of Fructose-bisphosphate aldolase B (ALDOB) from Pongo abelii (Sumatran orangutan).